The following is a 244-amino-acid chain: uncharacterized protein (244 aa).

The region spanning 5-244 (QLLLAHRGYS…ANKKFEIKIN (240 aa)) is the GP-PDE domain.

The protein to glycerophosphoryl diester phosphodiesterases (EC 3.1.4.46). This sequence to M.genitalium MG385.

This is an uncharacterized protein from Mycoplasma genitalium (strain ATCC 33530 / DSM 19775 / NCTC 10195 / G37) (Mycoplasmoides genitalium).